The sequence spans 601 residues: Elongation factor 4 (601 aa).

In terms of domain architecture, tr-type G spans 7–189; it reads KNIRNFSIVA…AIVTRLPPPQ (183 aa). Residues 19 to 24 and 136 to 139 each bind GTP; these read DHGKST and NKID.

This sequence belongs to the TRAFAC class translation factor GTPase superfamily. Classic translation factor GTPase family. LepA subfamily.

Its subcellular location is the cell inner membrane. It catalyses the reaction GTP + H2O = GDP + phosphate + H(+). Functionally, required for accurate and efficient protein synthesis under certain stress conditions. May act as a fidelity factor of the translation reaction, by catalyzing a one-codon backward translocation of tRNAs on improperly translocated ribosomes. Back-translocation proceeds from a post-translocation (POST) complex to a pre-translocation (PRE) complex, thus giving elongation factor G a second chance to translocate the tRNAs correctly. Binds to ribosomes in a GTP-dependent manner. The chain is Elongation factor 4 from Methylocella silvestris (strain DSM 15510 / CIP 108128 / LMG 27833 / NCIMB 13906 / BL2).